A 234-amino-acid chain; its full sequence is Arsenate respiratory reductase iron-sulfur subunit ArrB (234 aa).

4Fe-4S ferredoxin-type domains are found at residues 3–32 (LGMV…NDGI), 48–79 (VKYT…KDKR), and 80–109 (GLTL…FNAA). [4Fe-4S] cluster is bound by residues C12, C15, C18, C22, C57, C60, C65, C69, C89, C92, C95, C99, C164, C167, C179, and C183.

As to quaternary structure, heterodimer composed of one large subunit (ArrA) and one small subunit (ArrB). [4Fe-4S] cluster serves as cofactor.

It is found in the periplasm. Its activity is regulated as follows. Phosphate is a competitive inhibitor. Functionally, component of the arsenate respiratory reductase (Arr) complex, which catalyzes the reduction of arsenate (As(V)) to arsenite (As(III)). ArrB is probably the electron transfer subunit. The periplasmic localization of this complex may allow the cell to couple arsenate reduction to energy production before arsenate can be transported to the cell cytoplasm and enter the ars detoxification pathway, an energy-requiring process. This chain is Arsenate respiratory reductase iron-sulfur subunit ArrB, found in Shewanella sp. (strain ANA-3).